Reading from the N-terminus, the 379-residue chain is GDSL esterase/lipase At3g05180 (379 aa).

The first 27 residues, 1–27 (METLFHTLLRLLLFVAISHTLSPLAGS), serve as a signal peptide directing secretion. Residue serine 43 is the Nucleophile of the active site. Residues asparagine 294 and asparagine 330 are each glycosylated (N-linked (GlcNAc...) asparagine). Active-site residues include aspartate 349 and histidine 352.

Belongs to the 'GDSL' lipolytic enzyme family.

It localises to the secreted. The sequence is that of GDSL esterase/lipase At3g05180 from Arabidopsis thaliana (Mouse-ear cress).